The sequence spans 77 residues: Acyl carrier protein (77 aa).

A Carrier domain is found at 2–77 (SNIEERVKKI…AAIDYVNSAQ (76 aa)). The residue at position 37 (serine 37) is an O-(pantetheine 4'-phosphoryl)serine.

The protein belongs to the acyl carrier protein (ACP) family. Post-translationally, 4'-phosphopantetheine is transferred from CoA to a specific serine of apo-ACP by AcpS. This modification is essential for activity because fatty acids are bound in thioester linkage to the sulfhydryl of the prosthetic group.

The protein localises to the cytoplasm. The protein operates within lipid metabolism; fatty acid biosynthesis. In terms of biological role, carrier of the growing fatty acid chain in fatty acid biosynthesis. The protein is Acyl carrier protein of Vibrio campbellii (strain ATCC BAA-1116).